The chain runs to 465 residues: Ribulose bisphosphate carboxylase large chain (465 aa).

N6,N6,N6-trimethyllysine is present on K4. Residues N113 and T163 each coordinate substrate. The active-site Proton acceptor is K165. K167 provides a ligand contact to substrate. K191, D193, and E194 together coordinate Mg(2+). At K191 the chain carries N6-carboxylysine. The active-site Proton acceptor is H284. R285, H317, and S369 together coordinate substrate.

It belongs to the RuBisCO large chain family. Type I subfamily. Heterohexadecamer of 8 large chains and 8 small chains; disulfide-linked. The disulfide link is formed within the large subunit homodimers. The cofactor is Mg(2+). The disulfide bond which can form in the large chain dimeric partners within the hexadecamer appears to be associated with oxidative stress and protein turnover.

The protein resides in the plastid. Its subcellular location is the chloroplast. It catalyses the reaction 2 (2R)-3-phosphoglycerate + 2 H(+) = D-ribulose 1,5-bisphosphate + CO2 + H2O. The enzyme catalyses D-ribulose 1,5-bisphosphate + O2 = 2-phosphoglycolate + (2R)-3-phosphoglycerate + 2 H(+). In terms of biological role, ruBisCO catalyzes two reactions: the carboxylation of D-ribulose 1,5-bisphosphate, the primary event in carbon dioxide fixation, as well as the oxidative fragmentation of the pentose substrate in the photorespiration process. Both reactions occur simultaneously and in competition at the same active site. The polypeptide is Ribulose bisphosphate carboxylase large chain (Ilex crenata (Japanese holly)).